The sequence spans 315 residues: beta-hydroxyaspartate dehydratase (315 aa).

The residue at position 53 (Lys53) is an N6-(pyridoxal phosphate)lysine. Residues Asn80, 179–183, and Thr303 each bind pyridoxal 5'-phosphate; that span reads GGGGM.

Pyridoxal 5'-phosphate is required as a cofactor.

The catalysed reaction is (3S)-3-hydroxy-D-aspartate = iminosuccinate + H2O. In terms of biological role, catalyzes the dehydration of (2R,3S)-beta-hydroxyaspartate ((3S)-3-hydroxy-D-aspartate) into iminosuccinate. Is essential for the growth of P.denitrificans in the presence of glycolate and glyoxylate since it functions in glyoxylate assimilation via the beta-hydroxyaspartate cycle (BHAC). This chain is beta-hydroxyaspartate dehydratase, found in Paracoccus denitrificans (strain Pd 1222).